Reading from the N-terminus, the 327-residue chain is Beta-ketoacyl-[acyl-carrier-protein] synthase III (327 aa).

Residues Cys114 and His254 contribute to the active site. Residues Gln255 to Arg259 are ACP-binding. Asn284 is a catalytic residue.

The protein belongs to the thiolase-like superfamily. FabH family. Homodimer.

The protein localises to the cytoplasm. It carries out the reaction malonyl-[ACP] + acetyl-CoA + H(+) = 3-oxobutanoyl-[ACP] + CO2 + CoA. Its pathway is lipid metabolism; fatty acid biosynthesis. Functionally, catalyzes the condensation reaction of fatty acid synthesis by the addition to an acyl acceptor of two carbons from malonyl-ACP. Catalyzes the first condensation reaction which initiates fatty acid synthesis and may therefore play a role in governing the total rate of fatty acid production. Possesses both acetoacetyl-ACP synthase and acetyl transacylase activities. Its substrate specificity determines the biosynthesis of branched-chain and/or straight-chain of fatty acids. The sequence is that of Beta-ketoacyl-[acyl-carrier-protein] synthase III from Levilactobacillus brevis (strain ATCC 367 / BCRC 12310 / CIP 105137 / JCM 1170 / LMG 11437 / NCIMB 947 / NCTC 947) (Lactobacillus brevis).